The following is a 435-amino-acid chain: Histidinol dehydrogenase (435 aa).

NAD(+)-binding residues include Y131, Q189, and N212. The substrate site is built by S238, Q260, and H263. Positions 260 and 263 each coordinate Zn(2+). Active-site proton acceptor residues include E327 and H328. H328, D361, E415, and H420 together coordinate substrate. A Zn(2+)-binding site is contributed by D361. Residue H420 participates in Zn(2+) binding.

The protein belongs to the histidinol dehydrogenase family. Homodimer. It depends on Zn(2+) as a cofactor.

It carries out the reaction L-histidinol + 2 NAD(+) + H2O = L-histidine + 2 NADH + 3 H(+). Its pathway is amino-acid biosynthesis; L-histidine biosynthesis; L-histidine from 5-phospho-alpha-D-ribose 1-diphosphate: step 9/9. Its function is as follows. Catalyzes the sequential NAD-dependent oxidations of L-histidinol to L-histidinaldehyde and then to L-histidine. This chain is Histidinol dehydrogenase, found in Buchnera aphidicola subsp. Baizongia pistaciae (strain Bp).